A 301-amino-acid polypeptide reads, in one-letter code: Diaminopimelate epimerase (301 aa).

Substrate contacts are provided by Asn15, Gln47, and Asn67. The active-site Proton donor is the Cys76. Residues 77 to 78, Asn163, Asn197, and 215 to 216 contribute to the substrate site; these read GN and ER. Cys224 functions as the Proton acceptor in the catalytic mechanism. 225 to 226 provides a ligand contact to substrate; sequence GS. The segment at 280–301 is disordered; the sequence is SGSLDPSTGLWSRDGTQEAGAR.

Belongs to the diaminopimelate epimerase family. As to quaternary structure, homodimer.

It is found in the cytoplasm. The catalysed reaction is (2S,6S)-2,6-diaminopimelate = meso-2,6-diaminopimelate. Its pathway is amino-acid biosynthesis; L-lysine biosynthesis via DAP pathway; DL-2,6-diaminopimelate from LL-2,6-diaminopimelate: step 1/1. Catalyzes the stereoinversion of LL-2,6-diaminopimelate (L,L-DAP) to meso-diaminopimelate (meso-DAP), a precursor of L-lysine and an essential component of the bacterial peptidoglycan. This chain is Diaminopimelate epimerase, found in Rhizobium leguminosarum bv. trifolii (strain WSM2304).